Here is a 170-residue protein sequence, read N- to C-terminus: Shikimate kinase (170 aa).

Residue 15–20 (GAGKTT) participates in ATP binding. Threonine 19 contributes to the Mg(2+) binding site. Positions 37, 61, and 83 each coordinate substrate. Position 121 (arginine 121) interacts with ATP. Arginine 140 lines the substrate pocket.

It belongs to the shikimate kinase family. In terms of assembly, monomer. Mg(2+) serves as cofactor.

It is found in the cytoplasm. The catalysed reaction is shikimate + ATP = 3-phosphoshikimate + ADP + H(+). It functions in the pathway metabolic intermediate biosynthesis; chorismate biosynthesis; chorismate from D-erythrose 4-phosphate and phosphoenolpyruvate: step 5/7. Functionally, catalyzes the specific phosphorylation of the 3-hydroxyl group of shikimic acid using ATP as a cosubstrate. This chain is Shikimate kinase, found in Neisseria gonorrhoeae (strain ATCC 700825 / FA 1090).